A 250-amino-acid polypeptide reads, in one-letter code: Short-chain dehydrogenase RED3 (250 aa).

Isoleucine 16, serine 35, glutamate 63, and asparagine 91 together coordinate NADP(+). Catalysis depends on proton donor residues serine 145 and tyrosine 164. Residues tyrosine 164, lysine 168, valine 195, and serine 197 each contribute to the NADP(+) site. Lysine 168 (lowers pKa of active site Tyr) is an active-site residue.

It belongs to the short-chain dehydrogenases/reductases (SDR) family.

It functions in the pathway polyketide biosynthesis. Short-chain dehydrogenase; part of the gene cluster that mediates the biosynthesis of pyriculol and pyriculariol, two heptaketides that induce lesion formation upon application on rice leaves but are dispensable for pathogenicity. The highly reducing polyketide synthase synthesizes the heptaketide backbone of pyriculol and pyriculariol. Pyriculol and pyriculariol contain several hydroxyl moieties and double bonds, so it can be assumed that several reduction steps occur during biosynthesis. These reactions could be executed by PKS19 itself or partly by the tailoring enzymes OXR1, OXR2, RED1, RED2 or RED3, identified within the cluster. The FAD-linked oxidoreductase OXR1 is the only tailoring enzyme for which the function has been determined yet, and is involved in the oxidation of dihydropyriculol and dihydropyriculariol into pyriculol and pyriculariol, respectively. This Pyricularia oryzae (strain 70-15 / ATCC MYA-4617 / FGSC 8958) (Rice blast fungus) protein is Short-chain dehydrogenase RED3.